Consider the following 556-residue polypeptide: (6-4)DNA photolyase (556 aa).

One can recognise a Photolyase/cryptochrome alpha/beta domain in the interval 24–162; the sequence is SGSLIWFRKG…EVFSPVSHTL (139 aa). Phosphate is bound at residue Glu-262. FAD is bound by residues Lys-263, 276–280, 317–321, 380–383, Arg-386, 415–417, and Asn-421; these read TTVMS, QLLWR, WMHH, and DSD. Trp-320 is a binding site for DNA. The interval 382 to 387 is interaction with DNA; that stretch reads HHLARH. Position 427 (Trp-427) interacts with DNA. The segment at 534-556 is disordered; it reads LRRKLQKDEHEESKIRNQRPKLK. Positions 539 to 548 are enriched in basic and acidic residues; sequence QKDEHEESKI.

The protein belongs to the DNA photolyase class-1 family. The cofactor is FAD. As to expression, expressed in siliques, flowers and leaves. Not detected in roots.

The enzyme catalyses (6-4) photoproduct (in DNA) = 2 pyrimidine residues (in DNA).. Its function is as follows. Involved in repair of UV radiation-induced DNA damage. Catalyzes the photoreactivation of pyrimidine [6-4] pyrimidone photoproduct (6-4 products). Binds specifically to DNA containing 6-4 products and repairs these lesions in a visible light-dependent manner. Not required for repair of cyclobutane pyrimidine dimer (CPD). The chain is (6-4)DNA photolyase (UVR3) from Arabidopsis thaliana (Mouse-ear cress).